A 272-amino-acid polypeptide reads, in one-letter code: 3-methyl-2-oxobutanoate hydroxymethyltransferase (272 aa).

Positions 52 and 91 each coordinate Mg(2+). Residues 52–53 (DS), aspartate 91, and lysine 121 each bind 3-methyl-2-oxobutanoate. Position 123 (glutamate 123) interacts with Mg(2+). The Proton acceptor role is filled by glutamate 190.

This sequence belongs to the PanB family. As to quaternary structure, homodecamer; pentamer of dimers. Requires Mg(2+) as cofactor.

The protein resides in the cytoplasm. The enzyme catalyses 3-methyl-2-oxobutanoate + (6R)-5,10-methylene-5,6,7,8-tetrahydrofolate + H2O = 2-dehydropantoate + (6S)-5,6,7,8-tetrahydrofolate. The protein operates within cofactor biosynthesis; (R)-pantothenate biosynthesis; (R)-pantoate from 3-methyl-2-oxobutanoate: step 1/2. In terms of biological role, catalyzes the reversible reaction in which hydroxymethyl group from 5,10-methylenetetrahydrofolate is transferred onto alpha-ketoisovalerate to form ketopantoate. This is 3-methyl-2-oxobutanoate hydroxymethyltransferase from Flavobacterium johnsoniae (strain ATCC 17061 / DSM 2064 / JCM 8514 / BCRC 14874 / CCUG 350202 / NBRC 14942 / NCIMB 11054 / UW101) (Cytophaga johnsonae).